We begin with the raw amino-acid sequence, 452 residues long: COP9 signalosome complex subunit 11 (452 aa).

The PCI domain maps to 205 to 374 (FYIEDPKTMM…ISYSKRSIVD (170 aa)).

In terms of assembly, component of a COP9 signalosome-like (CSN) complex.

It localises to the cytoplasm. The protein resides in the nucleus. In terms of biological role, component of the COP9 signalosome (CSN) complex that acts as an regulator of the ubiquitin (Ubl) conjugation pathway by mediating the deneddylation of the cullin subunit of SCF-type E3 ubiquitin-protein ligase complexes The CSN complex is involved in the regulation of the mating pheromone response. PCI8 may also be involved in transcriptional and translational control. This Candida glabrata (strain ATCC 2001 / BCRC 20586 / JCM 3761 / NBRC 0622 / NRRL Y-65 / CBS 138) (Yeast) protein is COP9 signalosome complex subunit 11 (PCI8).